The chain runs to 216 residues: MANKEEIIAKAKDAITDFDDELAAEVAAEALAAGVDPVELIEKGFTAGMQEVGEQFEQGTLFLPHVLAAAEAMNAGIEVIKPEMEKRKSQTKSLGTIVIGTIEGDIHSIGKDIVASMLNIAGFKVVDLGRDVPIKTFVEKAKEIKPQIIASSALMTTTMVNQIQIEEQLKEAGIRGQVKTMVGGAPVTQDWADKIGADIYGESATDVVSKVKAALL.

One can recognise a B12-binding N-terminal domain in the interval 1–92 (MANKEEIIAK…EMEKRKSQTK (92 aa)). Residues 94-216 (LGTIVIGTIE…VVSKVKAALL (123 aa)) form the B12-binding domain. Residue His107 participates in methylcob(III)alamin binding.

It belongs to the methylamine corrinoid protein family. Can form a complex with MttB.

The protein operates within one-carbon metabolism; methanogenesis from trimethylamine. In terms of biological role, acts probably as a methyl group carrier between MttB and either MtbA or MtaA. The polypeptide is Trimethylamine corrinoid protein 1 (mttC1) (Methanosarcina mazei (strain ATCC BAA-159 / DSM 3647 / Goe1 / Go1 / JCM 11833 / OCM 88) (Methanosarcina frisia)).